The following is a 219-amino-acid chain: Ion-translocating oxidoreductase complex subunit G (219 aa).

The helical transmembrane segment at 25–45 (GLLLGLFSLVSALMLALASDA) threads the bilayer. An FMN phosphoryl threonine modification is found at threonine 187.

This sequence belongs to the RnfG family. In terms of assembly, the complex is composed of six subunits: RnfA, RnfB, RnfC, RnfD, RnfE and RnfG. Requires FMN as cofactor.

The protein resides in the cellular chromatophore membrane. Functionally, part of a membrane-bound complex that couples electron transfer with translocation of ions across the membrane. This Cereibacter sphaeroides (strain ATCC 17029 / ATH 2.4.9) (Rhodobacter sphaeroides) protein is Ion-translocating oxidoreductase complex subunit G.